A 430-amino-acid polypeptide reads, in one-letter code: Argininosuccinate lyase (430 aa).

This sequence belongs to the lyase 1 family. Argininosuccinate lyase subfamily.

The protein localises to the cytoplasm. It carries out the reaction 2-(N(omega)-L-arginino)succinate = fumarate + L-arginine. It functions in the pathway amino-acid biosynthesis; L-arginine biosynthesis; L-arginine from L-ornithine and carbamoyl phosphate: step 3/3. The protein is Argininosuccinate lyase of Sorangium cellulosum (strain So ce56) (Polyangium cellulosum (strain So ce56)).